Here is a 125-residue protein sequence, read N- to C-terminus: Homeobox protein HD-8 (125 aa).

The segment at residues 30–89 is a DNA-binding region (homeobox); sequence EPDTRTRKTTFQMMVLKEVFKIAPHPSTLTKADLALMIKLPLKAVQIWFQNERSRKERGG.

The protein localises to the nucleus. In Encephalitozoon cuniculi (strain GB-M1) (Microsporidian parasite), this protein is Homeobox protein HD-8 (HD-8).